The primary structure comprises 747 residues: RNA polymerase II assembly factor rtp1 (747 aa).

HEAT repeat units follow at residues 37 to 75, 103 to 141, 320 to 358, 381 to 418, 459 to 485, 486 to 523, and 557 to 594; these read NYFL…LLGV, QIYN…NCHE, DIIR…VCGT, SQLA…NVDS, EENE…LDLE, NPIS…SKDD, and INPV…KYDD.

Belongs to the Tango6 family. Interacts with RNA polymerase II subunits. Interacts with nuclear pore complex subunits.

Its subcellular location is the cytoplasm. The protein resides in the nucleus. Functionally, required for the cytoplasmic assembly and the nuclear import of RNA polymerase II. This chain is RNA polymerase II assembly factor rtp1, found in Schizosaccharomyces pombe (strain 972 / ATCC 24843) (Fission yeast).